Here is a 1033-residue protein sequence, read N- to C-terminus: Probable LRR receptor-like serine/threonine-protein kinase At1g56140 (1033 aa).

The N-terminal stretch at 1 to 28 is a signal peptide; it reads MLRLWRYLCLLLTVWFLCNFGPVYVVRA. Topologically, residues 29-636 are extracellular; that stretch reads QNRTGATTHP…PSKGKSMTGT (608 aa). Residues Asn30, Asn60, and Asn94 are each glycosylated (N-linked (GlcNAc...) asparagine). LRR repeat units follow at residues 97 to 121, 122 to 145, 147 to 169, 170 to 193, 195 to 217, 241 to 264, 265 to 288, 289 to 313, 314 to 337, 339 to 361, 363 to 382, 383 to 406, and 422 to 445; these read ICRITNIKVYAMEVVGSIPQQLWTL, EYLTNLNLGQNVLTGSLPPALGNL, RMRWMTFGINALSGPIPKEIGLL, TDLRLLSISSNNFSGSIPDEIGRC, KLQQIYIDSSGLSGGLPVSFANL, WTKLTTLRILGTGLSGPIPASFSN, LTSLTELRLGDISNGNSSLEFIKD, MKSLSILVLRNNNLTGTIPSNIGEY, SSLRQLDLSFNKLHGTIPASLFNL, QLTHLFLGNNTLNGSLPTQKGQS, SNVDVSYNDLSGSLPSWVSL, PNLNLNLVANNFTLEGLDNRVLSG, and IYSDFSINCGGPEIRSVTEAVFER. N-linked (GlcNAc...) asparagine glycosylation is present at Asn144. N-linked (GlcNAc...) asparagine glycosylation is present at Asn181. 3 N-linked (GlcNAc...) asparagine glycosylation sites follow: Asn264, Asn280, and Asn301. Residues Asn347 and Asn351 are each glycosylated (N-linked (GlcNAc...) asparagine). A glycan (N-linked (GlcNAc...) asparagine) is linked at Asn393. Asn579 carries N-linked (GlcNAc...) asparagine glycosylation. A helical membrane pass occupies residues 637-657; the sequence is IVGVIVGVGLLSIISGVVIFI. Residues 658–1033 lie on the Cytoplasmic side of the membrane; the sequence is IRKRRKRYTD…MLGAQMNEGR (376 aa). At Thr682 the chain carries Phosphothreonine. Positions 693–951 constitute a Protein kinase domain; that stretch reads FDPSNKLGEG…LCTQTSHALR (259 aa). Residues 699 to 707 and Lys721 contribute to the ATP site; that span reads LGEGGFGPV. Tyr766 carries the phosphotyrosine modification. Asp817 (proton acceptor) is an active-site residue. A phosphoserine mark is found at Ser821 and Ser850. A phosphothreonine mark is found at Thr851 and Thr856. Tyr864 carries the post-translational modification Phosphotyrosine. The tract at residues 1012–1033 is disordered; sequence SEISPRNNDARPMLGAQMNEGR.

It belongs to the protein kinase superfamily. Ser/Thr protein kinase family.

The protein localises to the membrane. It catalyses the reaction L-seryl-[protein] + ATP = O-phospho-L-seryl-[protein] + ADP + H(+). The catalysed reaction is L-threonyl-[protein] + ATP = O-phospho-L-threonyl-[protein] + ADP + H(+). The polypeptide is Probable LRR receptor-like serine/threonine-protein kinase At1g56140 (Arabidopsis thaliana (Mouse-ear cress)).